The sequence spans 318 residues: MNMNSLSVSRVLADLAGKDFISCSDFTSDQVKALLQLSSQLKNGDRRIDLGNRVLGLIFSKASTRTRVSFQVAMARLGGQTIDLSNQATQLARGEPLKDTARVLSRYCDALALRTFGNDELIEYAKWSSIPVINALTDLEHPCQALADFLTIKEAFGSLDGITLAYIGDGNNVLNSLMICGTLLGVNIQIASPKGFEPLPSIVERAKTLAHPTLKICVSNNPIDAVSGAHVIYTDVWASMGQESEQAQRKEIFEGYTVNKDLVDKAEKESIILHCLPAHRGEEITDDVLESSASRIFDQAENRLHVQQALLAALLGGL.

Carbamoyl phosphate is bound by residues 63-66, glutamine 90, arginine 114, and 141-144; these read STRT and HPCQ. Residues asparagine 172, aspartate 235, and 239–240 contribute to the L-ornithine site; that span reads SM. Carbamoyl phosphate is bound by residues 275–276 and arginine 303; that span reads CL.

Belongs to the aspartate/ornithine carbamoyltransferase superfamily. OTCase family.

Its subcellular location is the cytoplasm. It carries out the reaction carbamoyl phosphate + L-ornithine = L-citrulline + phosphate + H(+). It participates in amino-acid biosynthesis; L-arginine biosynthesis; L-arginine from L-ornithine and carbamoyl phosphate: step 1/3. Reversibly catalyzes the transfer of the carbamoyl group from carbamoyl phosphate (CP) to the N(epsilon) atom of ornithine (ORN) to produce L-citrulline. The chain is Ornithine carbamoyltransferase from Prochlorococcus marinus (strain SARG / CCMP1375 / SS120).